A 978-amino-acid chain; its full sequence is Xylanolytic transcriptional activator xlnR (978 aa).

Disordered regions lie at residues 1–39 (MSTTSVQHFAPSYPPFSSGLSSNRMAQSQTPGLDTLAEG) and 53–116 (AAAG…RDPL). Over residues 18 to 32 (SGLSSNRMAQSQTPG) the composition is skewed to polar residues. Positions 53–69 (AAAGDTTATAASGPSDP) are enriched in low complexity. Over residues 71–82 (SKSKDPYDFDHH) the composition is skewed to basic and acidic residues. The span at 83–93 (NHNHHNHHNNN) shows a compositional bias: basic residues. The segment covering 94–103 (HHPNSNSNNS) has biased composition (low complexity). Positions 140-166 (CDQCNQLRTRCDGQNPCAHCIEFGLTC) form a DNA-binding region, zn(2)-C6 fungal-type. Disordered regions lie at residues 179–223 (SKKD…ELNG), 238–293 (SAQP…PIPV), and 588–629 (ELPP…PGNT). Residues 184-193 (AAAAAAATAT) are compositionally biased toward low complexity. The span at 214 to 223 (PPDRRQELNG) shows a compositional bias: basic and acidic residues.

This sequence belongs to the xlnR/xlr1 family.

The protein localises to the nucleus. Transcriptional activator of the xylanolytic system. Involved in the regulation of extracellular cellulolytic and xylanolytic genes and in the regulation of the intracellular activities of D-xylose catabolic genes in the pentose catabolic pathway (PCP) in response to the presence of D-xylose. In Aspergillus clavatus (strain ATCC 1007 / CBS 513.65 / DSM 816 / NCTC 3887 / NRRL 1 / QM 1276 / 107), this protein is Xylanolytic transcriptional activator xlnR (xlnR).